The following is a 78-amino-acid chain: Defensin-like protein 141 (78 aa).

Positions 1–24 are cleaved as a signal peptide; the sequence is MTKSIISAFFIILILGMMVNEIEG. Disulfide bonds link cysteine 31–cysteine 76, cysteine 40–cysteine 59, cysteine 45–cysteine 70, and cysteine 49–cysteine 72.

This sequence belongs to the DEFL family.

It localises to the secreted. In Arabidopsis thaliana (Mouse-ear cress), this protein is Defensin-like protein 141 (LCR3).